The chain runs to 344 residues: Protein-glutamate methylesterase/protein-glutamine glutaminase 1 (344 aa).

A Response regulatory domain is found at 5-122; that stretch reads RVLVVDDSAT…GTQEALAEIV (118 aa). At aspartate 56 the chain carries 4-aspartylphosphate. Residues 151–343 form the CheB-type methylesterase domain; it reads FMPSGDIVAI…QSILDLASAR (193 aa). Catalysis depends on residues serine 163, histidine 189, and aspartate 285.

Belongs to the CheB family. Post-translationally, phosphorylated by CheA. Phosphorylation of the N-terminal regulatory domain activates the methylesterase activity.

The protein localises to the cytoplasm. It carries out the reaction [protein]-L-glutamate 5-O-methyl ester + H2O = L-glutamyl-[protein] + methanol + H(+). The catalysed reaction is L-glutaminyl-[protein] + H2O = L-glutamyl-[protein] + NH4(+). Its function is as follows. Involved in chemotaxis. Part of a chemotaxis signal transduction system that modulates chemotaxis in response to various stimuli. Catalyzes the demethylation of specific methylglutamate residues introduced into the chemoreceptors (methyl-accepting chemotaxis proteins or MCP) by CheR. Also mediates the irreversible deamidation of specific glutamine residues to glutamic acid. This is Protein-glutamate methylesterase/protein-glutamine glutaminase 1 from Caulobacter vibrioides (strain ATCC 19089 / CIP 103742 / CB 15) (Caulobacter crescentus).